Consider the following 406-residue polypeptide: Imidazolonepropionase (406 aa).

Residues histidine 72 and histidine 74 each contribute to the Fe(3+) site. Positions 72 and 74 each coordinate Zn(2+). 4-imidazolone-5-propanoate contacts are provided by arginine 81, tyrosine 144, and histidine 177. An N-formimidoyl-L-glutamate-binding site is contributed by tyrosine 144. Histidine 242 contacts Fe(3+). Residue histidine 242 coordinates Zn(2+). Residue glutamine 245 coordinates 4-imidazolone-5-propanoate. Fe(3+) is bound at residue aspartate 317. Aspartate 317 is a binding site for Zn(2+). 2 residues coordinate N-formimidoyl-L-glutamate: asparagine 319 and glycine 321. Threonine 322 is a binding site for 4-imidazolone-5-propanoate.

Belongs to the metallo-dependent hydrolases superfamily. HutI family. The cofactor is Zn(2+). It depends on Fe(3+) as a cofactor.

It localises to the cytoplasm. The enzyme catalyses 4-imidazolone-5-propanoate + H2O = N-formimidoyl-L-glutamate. The protein operates within amino-acid degradation; L-histidine degradation into L-glutamate; N-formimidoyl-L-glutamate from L-histidine: step 3/3. Functionally, catalyzes the hydrolytic cleavage of the carbon-nitrogen bond in imidazolone-5-propanoate to yield N-formimidoyl-L-glutamate. It is the third step in the universal histidine degradation pathway. The polypeptide is Imidazolonepropionase (Yersinia pseudotuberculosis serotype O:3 (strain YPIII)).